The chain runs to 206 residues: Protein-methionine-sulfoxide reductase heme-binding subunit MsrQ (206 aa).

6 helical membrane passes run 7–27 (IIIHVCCLGPVAWLAWVLLSG), 43–63 (FLGFSALTILLIMFILGKVFY), 77–97 (LGLWAWFYVVLHVYAYLALEL), 112–132 (GYLIIGAIAFLILTLMALSSW), 142–162 (WWFYLHQLGYYALLLGAIHYV), and 172–192 (SMLYLILSIMILCDALYGLFI).

It belongs to the MsrQ family. In terms of assembly, heterodimer of a catalytic subunit (MsrP) and a heme-binding subunit (MsrQ). FMN is required as a cofactor. The cofactor is heme b.

It is found in the cell inner membrane. Its function is as follows. Part of the MsrPQ system that repairs oxidized periplasmic proteins containing methionine sulfoxide residues (Met-O), using respiratory chain electrons. Thus protects these proteins from oxidative-stress damage caused by reactive species of oxygen and chlorine generated by the host defense mechanisms. MsrPQ is essential for the maintenance of envelope integrity under bleach stress, rescuing a wide series of structurally unrelated periplasmic proteins from methionine oxidation. MsrQ provides electrons for reduction to the reductase catalytic subunit MsrP, using the quinone pool of the respiratory chain. This chain is Protein-methionine-sulfoxide reductase heme-binding subunit MsrQ, found in Pasteurella multocida (strain Pm70).